A 240-amino-acid chain; its full sequence is Uridylate kinase (240 aa).

13–16 (KASG) contributes to the ATP binding site. The interval 21–26 (GSQGFG) is involved in allosteric activation by GTP. Glycine 55 serves as a coordination point for UMP. ATP is bound by residues glycine 56 and arginine 60. UMP contacts are provided by residues aspartate 75 and 136–143 (TGNPFFTT). 4 residues coordinate ATP: threonine 163, glutamine 164, tyrosine 169, and aspartate 172.

This sequence belongs to the UMP kinase family. As to quaternary structure, homohexamer.

Its subcellular location is the cytoplasm. It catalyses the reaction UMP + ATP = UDP + ADP. Its pathway is pyrimidine metabolism; CTP biosynthesis via de novo pathway; UDP from UMP (UMPK route): step 1/1. Allosterically activated by GTP. Inhibited by UTP. Catalyzes the reversible phosphorylation of UMP to UDP. This chain is Uridylate kinase, found in Brucella melitensis biotype 1 (strain ATCC 23456 / CCUG 17765 / NCTC 10094 / 16M).